We begin with the raw amino-acid sequence, 414 residues long: Isocitrate dehydrogenase [NADP] cytoplasmic (414 aa).

Ser2 bears the N-acetylserine mark. Phosphotyrosine is present on Tyr42. Thr75–Thr77 contacts NADP(+). Residue Thr77 coordinates substrate. An N6-acetyllysine modification is found at Lys81. Arg82 contacts NADP(+). Residues Ser94 to Arg100 and Arg109 each bind substrate. Lys126 carries the post-translational modification N6-succinyllysine. Positions 132 and 212 each coordinate substrate. Residues Lys224, Lys233, and Lys243 each carry the N6-acetyllysine modification. Asp252 contributes to the Mn(2+) binding site. Residue Lys260 participates in NADP(+) binding. Mn(2+) is bound by residues Asp275 and Asp279. Gly310–His315 contributes to the NADP(+) binding site. Residue Lys321 is modified to N6-acetyllysine. Residue Asn328 coordinates NADP(+). A Phosphoserine modification is found at Ser389. Lys400 is modified (N6-succinyllysine).

The protein belongs to the isocitrate and isopropylmalate dehydrogenases family. As to quaternary structure, homodimer. Mg(2+) is required as a cofactor. Mn(2+) serves as cofactor. In terms of processing, the N-terminus is blocked. Acetylation at Lys-374 dramatically reduces catalytic activity. As to expression, ubiquitous.

It is found in the cytoplasm. It localises to the cytosol. Its subcellular location is the peroxisome. It carries out the reaction D-threo-isocitrate + NADP(+) = 2-oxoglutarate + CO2 + NADPH. Its function is as follows. Catalyzes the NADP(+)-dependent oxidative decarboxylation of isocitrate (D-threo-isocitrate) to 2-ketoglutarate (2-oxoglutarate), which is required by other enzymes such as the phytanoyl-CoA dioxygenase. Plays a critical role in the generation of NADPH, an important cofactor in many biosynthesis pathways. May act as a corneal epithelial crystallin and may be involved in maintaining corneal epithelial transparency. This is Isocitrate dehydrogenase [NADP] cytoplasmic (Idh1) from Rattus norvegicus (Rat).